Consider the following 232-residue polypeptide: Large ribosomal subunit protein uL1 (232 aa).

This sequence belongs to the universal ribosomal protein uL1 family. Part of the 50S ribosomal subunit.

In terms of biological role, binds directly to 23S rRNA. The L1 stalk is quite mobile in the ribosome, and is involved in E site tRNA release. Its function is as follows. Protein L1 is also a translational repressor protein, it controls the translation of the L11 operon by binding to its mRNA. The chain is Large ribosomal subunit protein uL1 from Roseobacter denitrificans (strain ATCC 33942 / OCh 114) (Erythrobacter sp. (strain OCh 114)).